Reading from the N-terminus, the 320-residue chain is Cytochrome f (320 aa).

Positions 1 to 35 (MQTRNTFSWIREEITRSISVSLMIYIITWASISGA) are cleaved as a signal peptide. Heme is bound by residues tyrosine 36, cysteine 56, cysteine 59, and histidine 60. A helical transmembrane segment spans residues 286 to 306 (VQGLLFFLGSVVLAQIFLVLK).

Belongs to the cytochrome f family. As to quaternary structure, the 4 large subunits of the cytochrome b6-f complex are cytochrome b6, subunit IV (17 kDa polypeptide, petD), cytochrome f and the Rieske protein, while the 4 small subunits are PetG, PetL, PetM and PetN. The complex functions as a dimer. Heme is required as a cofactor.

It is found in the plastid. The protein resides in the chloroplast thylakoid membrane. Component of the cytochrome b6-f complex, which mediates electron transfer between photosystem II (PSII) and photosystem I (PSI), cyclic electron flow around PSI, and state transitions. The chain is Cytochrome f from Capsella bursa-pastoris (Shepherd's purse).